A 551-amino-acid chain; its full sequence is Electron transfer flavoprotein-ubiquinone oxidoreductase (551 aa).

10–24 serves as a coordination point for FAD; the sequence is VVIVGAGPAGLSAAC. 4 residues coordinate [4Fe-4S] cluster: cysteine 496, cysteine 520, cysteine 523, and cysteine 526. Positions 511-540 constitute a 4Fe-4S ferredoxin-type domain; it reads KRFQINAQNCVHCKTCDIKDPAQNITWVAP.

This sequence belongs to the ETF-QO/FixC family. It depends on [4Fe-4S] cluster as a cofactor. Requires FAD as cofactor.

The enzyme catalyses a ubiquinone + reduced [electron-transfer flavoprotein] = a ubiquinol + oxidized [electron-transfer flavoprotein] + H(+). Functionally, accepts electrons from ETF and reduces ubiquinone. In Pseudomonas aeruginosa (strain ATCC 15692 / DSM 22644 / CIP 104116 / JCM 14847 / LMG 12228 / 1C / PRS 101 / PAO1), this protein is Electron transfer flavoprotein-ubiquinone oxidoreductase.